The primary structure comprises 906 residues: Cadherin-2 (906 aa).

Residues 1–25 (MCRIAGALRTLLPLLAALLQASVEA) form the signal peptide. The propeptide occupies 26 to 159 (SGEIALCKTG…HSGHLQRQKR (134 aa)). Ser-96 and Ser-135 each carry phosphoserine; by FAM20C. Cadherin domains lie at 160-267 (DWVI…RPEF), 268-382 (LHQV…PPEF), 383-497 (TAMT…NPYF), 498-603 (APNP…DNAP), and 604-714 (QVLP…DVDR). Residues 160–724 (DWVIPPINLP…IVGAGLGTGA (565 aa)) lie on the Extracellular side of the membrane. Residue Glu-170 coordinates Ca(2+). N-linked (GlcNAc...) asparagine glycosylation occurs at Asn-190. 7 residues coordinate Ca(2+): Asp-226, Glu-228, Asp-259, Met-260, Asn-261, Asp-262, and Asn-263. The N-linked (GlcNAc...) asparagine glycan is linked to Asn-273. Ca(2+) is bound by residues Asp-293, Asp-295, and Asn-301. Asn-325 carries an N-linked (GlcNAc...) asparagine glycan. Residue Asp-353 participates in Ca(2+) binding. N-linked (GlcNAc...) asparagine glycosylation is found at Asn-402, Asn-572, Asn-651, and Asn-692. Residues 725 to 745 (IIAILLCIIILLILVLMFVVW) form a helical membrane-spanning segment. At 746 to 906 (MKRRDKERQA…LADMYGGGDD (161 aa)) the chain is on the cytoplasmic side. A compositionally biased stretch (low complexity) spans 863-880 (SGSTAGSLSSLNSSSSGG). Residues 863 to 884 (SGSTAGSLSSLNSSSSGGEQDY) are disordered.

In terms of assembly, homodimer (via extracellular region). Can also form heterodimers with other cadherins (via extracellular region). Dimerization occurs in trans, i.e. with a cadherin chain from another cell. Interacts with CDCP1. Interacts with PCDH8; this complex may also include TAOK2. The interaction with PCDH8 may lead to internalization through TAOK2/p38 MAPK pathway. Identified in a complex containing FGFR4, NCAM1, CDH2, PLCG1, FRS2, SRC, SHC1, GAP43 and CTTN. May interact with OBSCN (via protein kinase domain 2). Interacts with FBXO45. Cleaved by MMP24. Ectodomain cleavage leads to the generation of a soluble 90 kDa N-terminal soluble fragment and a 45 kDa membrane-bound C-terminal fragment 1 (CTF1), which is further cleaved by gamma-secretase into a 35 kDa. Cleavage in neural stem cells by MMP24 affects CDH2-mediated anchorage of neural stem cells to ependymocytes in the adult subependymal zone, leading to modulate neural stem cell quiescence. Post-translationally, may be phosphorylated by OBSCN.

It localises to the cell membrane. The protein localises to the sarcolemma. The protein resides in the cell junction. Its subcellular location is the cell surface. It is found in the desmosome. It localises to the adherens junction. Its function is as follows. Calcium-dependent cell adhesion protein; preferentially mediates homotypic cell-cell adhesion by dimerization with a CDH2 chain from another cell. Cadherins may thus contribute to the sorting of heterogeneous cell types. Acts as a regulator of neural stem cells quiescence by mediating anchorage of neural stem cells to ependymocytes in the adult subependymal zone: upon cleavage by MMP24, CDH2-mediated anchorage is affected, leading to modulate neural stem cell quiescence. Plays a role in cell-to-cell junction formation between pancreatic beta cells and neural crest stem (NCS) cells, promoting the formation of processes by NCS cells. Required for proper neurite branching. Required for pre- and postsynaptic organization. CDH2 may be involved in neuronal recognition mechanism. In hippocampal neurons, may regulate dendritic spine density. This is Cadherin-2 (CDH2) from Homo sapiens (Human).